We begin with the raw amino-acid sequence, 470 residues long: Aldehyde dehydrogenase family 3 comG (470 aa).

Residue 196 to 201 coordinates NAD(+); sequence GSVKVG. Active-site residues include Glu218 and Cys252.

The protein belongs to the aldehyde dehydrogenase family.

It localises to the cytoplasm. It carries out the reaction an aldehyde + NADP(+) + H2O = a carboxylate + NADPH + 2 H(+). The enzyme catalyses an aldehyde + NAD(+) + H2O = a carboxylate + NADH + 2 H(+). The protein is Aldehyde dehydrogenase family 3 comG (comG) of Dictyostelium discoideum (Social amoeba).